Consider the following 307-residue polypeptide: Pseudouridine-5'-phosphate glycosidase (307 aa).

The active-site Proton donor is the Glu-28. Substrate contacts are provided by Lys-89 and Val-109. Asp-141 contributes to the Mn(2+) binding site. Residue 143–145 (SAD) coordinates substrate. Residue Lys-162 is the Nucleophile of the active site.

It belongs to the pseudouridine-5'-phosphate glycosidase family. As to quaternary structure, homotrimer. Mn(2+) is required as a cofactor.

The enzyme catalyses D-ribose 5-phosphate + uracil = psi-UMP + H2O. Its function is as follows. Catalyzes the reversible cleavage of pseudouridine 5'-phosphate (PsiMP) to ribose 5-phosphate and uracil. Functions biologically in the cleavage direction, as part of a pseudouridine degradation pathway. This chain is Pseudouridine-5'-phosphate glycosidase, found in Nocardioides sp. (strain ATCC BAA-499 / JS614).